The chain runs to 711 residues: Polyribonucleotide nucleotidyltransferase (711 aa).

Mg(2+) contacts are provided by aspartate 486 and aspartate 492. One can recognise a KH domain in the interval 553 to 612 (PRIHTIKINPDKIKDVIGKGGSVIRALTEETGTTIEIEDDGTVKIAATDGEKAKHAIRRI). Residues 622–690 (GRVYTGKVTR…RQGRIRLSIK (69 aa)) form the S1 motif domain. A disordered region spans residues 690–711 (KEATEQSQPAAAPEAPAAEQGE). A compositionally biased stretch (low complexity) spans 694–711 (EQSQPAAAPEAPAAEQGE).

Belongs to the polyribonucleotide nucleotidyltransferase family. Component of the RNA degradosome, which is a multiprotein complex involved in RNA processing and mRNA degradation. The cofactor is Mg(2+).

The protein resides in the cytoplasm. The catalysed reaction is RNA(n+1) + phosphate = RNA(n) + a ribonucleoside 5'-diphosphate. Its function is as follows. Involved in mRNA degradation. Catalyzes the phosphorolysis of single-stranded polyribonucleotides processively in the 3'- to 5'-direction. This is Polyribonucleotide nucleotidyltransferase from Shigella dysenteriae serotype 1 (strain Sd197).